A 302-amino-acid polypeptide reads, in one-letter code: MSMWGAVRCRLIQTRSAVRKILQQNRAFCSGSSVGIREKLLAFPGGSVELQKLQESGIAVLTVSNPPARMNAFSGCMMLELEQRVNELEIWTEGKAVIVQGAAGNFCSGSDLNAVRAIANPHDGMKMCEFMQNTLARLLRLPLISVALVEGRALGGGAELTTACDFRLMTSDAVIQFVHKHMGLVPGWGGAARLVGIIGSRNALKLLSGARKVDPDYGKQMGLVDEVLQCSSGEGKALAHAEHWIAPFIKGPAPVIQAIKKVVVSGRELSLDEALKCERSVFGTVWGGPANLEALASKPKHK.

It belongs to the enoyl-CoA hydratase/isomerase family.

The protein resides in the cytoplasm. It localises to the cytosol. It catalyses the reaction (2S)-ethylmalonyl-CoA + H(+) = butanoyl-CoA + CO2. The enzyme catalyses (S)-methylmalonyl-CoA + H(+) = propanoyl-CoA + CO2. The catalysed reaction is (2R)-ethylmalonyl-CoA + H(+) = butanoyl-CoA + CO2. In terms of biological role, decarboxylates ethylmalonyl-CoA, a potentially toxic metabolite, to form butyryl-CoA, suggesting it might be involved in metabolite proofreading. Acts preferentially on (S)-ethylmalonyl-CoA but also has some activity on the (R)-isomer. Also has methylmalonyl-CoA decarboxylase activity at lower level. This Danio rerio (Zebrafish) protein is Ethylmalonyl-CoA decarboxylase (echdc1).